We begin with the raw amino-acid sequence, 282 residues long: UDP-3-O-acyl-N-acetylglucosamine deacetylase (282 aa).

Zn(2+) contacts are provided by His-74, His-226, and Asp-230. The active-site Proton donor is His-253.

The protein belongs to the LpxC family. Requires Zn(2+) as cofactor.

The catalysed reaction is a UDP-3-O-[(3R)-3-hydroxyacyl]-N-acetyl-alpha-D-glucosamine + H2O = a UDP-3-O-[(3R)-3-hydroxyacyl]-alpha-D-glucosamine + acetate. The protein operates within glycolipid biosynthesis; lipid IV(A) biosynthesis; lipid IV(A) from (3R)-3-hydroxytetradecanoyl-[acyl-carrier-protein] and UDP-N-acetyl-alpha-D-glucosamine: step 2/6. Its function is as follows. Catalyzes the hydrolysis of UDP-3-O-myristoyl-N-acetylglucosamine to form UDP-3-O-myristoylglucosamine and acetate, the committed step in lipid A biosynthesis. The protein is UDP-3-O-acyl-N-acetylglucosamine deacetylase of Aquifex aeolicus (strain VF5).